A 102-amino-acid polypeptide reads, in one-letter code: Large ribosomal subunit protein bL21 (102 aa).

It belongs to the bacterial ribosomal protein bL21 family. As to quaternary structure, part of the 50S ribosomal subunit. Contacts protein L20.

Its function is as follows. This protein binds to 23S rRNA in the presence of protein L20. This Sorangium cellulosum (strain So ce56) (Polyangium cellulosum (strain So ce56)) protein is Large ribosomal subunit protein bL21.